The primary structure comprises 212 residues: Protein-L-isoaspartate O-methyltransferase (212 aa).

Ser-60 is a catalytic residue.

The protein belongs to the methyltransferase superfamily. L-isoaspartyl/D-aspartyl protein methyltransferase family.

Its subcellular location is the cytoplasm. The catalysed reaction is [protein]-L-isoaspartate + S-adenosyl-L-methionine = [protein]-L-isoaspartate alpha-methyl ester + S-adenosyl-L-homocysteine. In terms of biological role, catalyzes the methyl esterification of L-isoaspartyl residues in peptides and proteins that result from spontaneous decomposition of normal L-aspartyl and L-asparaginyl residues. It plays a role in the repair and/or degradation of damaged proteins. This is Protein-L-isoaspartate O-methyltransferase from Methanococcus maripaludis (strain DSM 14266 / JCM 13030 / NBRC 101832 / S2 / LL).